We begin with the raw amino-acid sequence, 223 residues long: Family of serine hydrolases 2 (223 aa).

Residues S110, D174, and H203 each act as charge relay system in the active site.

The protein belongs to the AB hydrolase 3 family.

The protein localises to the cytoplasm. In terms of biological role, serine hydrolase of unknown specificity. The protein is Family of serine hydrolases 2 (FSH2) of Saccharomyces cerevisiae (strain ATCC 204508 / S288c) (Baker's yeast).